Consider the following 204-residue polypeptide: Somatotropin (204 aa).

The N-terminal stretch at 1–17 (MDRVLLLLSVLSLGVSS) is a signal peptide. Glutamine 18 bears the Pyrrolidone carboxylic acid mark. Histidine 36 provides a ligand contact to Zn(2+). Cysteines 69 and 177 form a disulfide. Glutamate 186 is a Zn(2+) binding site. Cysteine 194 and cysteine 202 are disulfide-bonded.

It belongs to the somatotropin/prolactin family.

The protein resides in the secreted. Growth hormone plays an important role in growth control and is involved in the regulation of several anabolic processes. Implicated as an osmoregulatory substance important for seawater adaptation. This is Somatotropin (gh) from Sciaenops ocellatus (Red drum).